The sequence spans 63 residues: Small integral membrane protein 43 (63 aa).

Important for interaction with SLC2A1 and SLC2A3 stretches follow at residues 7–29 (LLLY…FVVI) and 51–57 (HREPWGF). Residues 9–29 (LYLALFFFLLFLLFLLLFVVI) traverse the membrane as a helical segment.

In terms of assembly, interacts with glucose transporters SLC2A1/GLUT1 and SLC2A3/GLUT3; the interactions may promote SLC2A1- and SLC2A3-mediated glucose transport to meet the energy needs of mesendoderm differentiation. As to expression, accumulates in the posterior primitive streak of mid-gastrulation embryos at 7.0 dpc. In the adult, highly abundant and enriched in the brain compared to other organs.

Its subcellular location is the cell membrane. Its function is as follows. Required for mesendoderm differentiation. Interacts with glucose transporters and promotes glucose uptake. Probably augments the glucose uptake capacity of glucose transporter proteins to meet the energy needs of mesendoderm differentiation. The sequence is that of Small integral membrane protein 43 from Mus musculus (Mouse).